Consider the following 110-residue polypeptide: DNA-directed RNA polymerase subunit omega (110 aa).

Belongs to the RNA polymerase subunit omega family. In terms of assembly, the RNAP catalytic core consists of 2 alpha, 1 beta, 1 beta' and 1 omega subunit. When a sigma factor is associated with the core the holoenzyme is formed, which can initiate transcription.

It carries out the reaction RNA(n) + a ribonucleoside 5'-triphosphate = RNA(n+1) + diphosphate. Its function is as follows. Promotes RNA polymerase assembly. Latches the N- and C-terminal regions of the beta' subunit thereby facilitating its interaction with the beta and alpha subunits. This chain is DNA-directed RNA polymerase subunit omega, found in Nocardioides sp. (strain ATCC BAA-499 / JS614).